The primary structure comprises 366 residues: Spermine synthase (366 aa).

A2 is subject to N-acetylalanine. S57 is subject to Phosphoserine. The region spanning 122-362 is the PABS domain; sequence RYWPTADGRL…ELWVFYTVWK (241 aa). An S-adenosyl 3-(methylsulfanyl)propylamine-binding site is contributed by Q148. Y177 and D201 together coordinate spermidine. S-adenosyl 3-(methylsulfanyl)propylamine-binding positions include E220 and 255–256; that span reads DC. The Proton acceptor role is filled by D276. Y351 and E353 together coordinate spermidine.

This sequence belongs to the spermidine/spermine synthase family. In terms of assembly, homodimer. Dimerization is mediated through the N-terminal domain and seems to be required for activity as deletion of the N-terminal domain causes complete loss of activity.

The enzyme catalyses S-adenosyl 3-(methylsulfanyl)propylamine + spermidine = spermine + S-methyl-5'-thioadenosine + H(+). Its pathway is amine and polyamine biosynthesis; spermine biosynthesis; spermine from spermidine: step 1/1. Catalyzes the production of spermine from spermidine and decarboxylated S-adenosylmethionine (dcSAM). Required for normal viability, growth and fertility. This is Spermine synthase (Sms) from Mus musculus (Mouse).